A 403-amino-acid polypeptide reads, in one-letter code: MNGIFAIEKPSGITSNQFMLKLQHALTKSQVFSKEIQRATAERKQQYEKQTGKKASKRKLRKVSKVKMGHGGTLDPLASGVLVIGIGAGTKKLANYLSGTVKVYESEALFGVSTTSGDVEGEILSQNSVKHLNFDDLKTVEEKFVGQLKQTPPIYAALKMDGKPLHEYAREGKPLPRAIEPRQVTIYDLKVFSDSLKRDHDYPLLRPTTEEAVDTVKNLNANMLNDVLYFSKEYTEKHGLDSEVAKVEEPFPLSEQEEQEIQKEGDSYRAPKLHFKANVSSGTYIRSLVSDIGKSMRSSCYMVKLIRLQQQDWSLEKNNVFQLTDFTERDEKVWSKVLEKVLDEGATVDVIEELKKAEKEIPADVKECIVSSDQPGDEATAETIETANAEEHSNTLKRKIEQV.

Aspartate 75 serves as the catalytic Nucleophile.

This sequence belongs to the pseudouridine synthase TruB family.

It is found in the nucleus. It localises to the mitochondrion. The enzyme catalyses uridine(55) in tRNA = pseudouridine(55) in tRNA. The catalysed reaction is a uridine in mRNA = a pseudouridine in mRNA. Functionally, responsible for synthesis of pseudouridine from uracil-55 in the psi GC loop of transfer RNAs. Also catalyzes pseudouridylation of mRNAs with the consensus sequence 5'-GGUUCRA-3'. The chain is tRNA pseudouridine synthase 4 (PUS4) from Saccharomyces cerevisiae (strain ATCC 204508 / S288c) (Baker's yeast).